The primary structure comprises 763 residues: Phospholipid phosphatase-related protein type 4 (763 aa).

The tract at residues 33 to 54 is disordered; sequence VHTSPGGGRRPGQAAGMSAKER. Position 36 is a phosphoserine (serine 36). The next 3 helical transmembrane spans lie at 67-87, 119-139, and 178-198; these read LPCF…SLYF, AIPF…TIMV, and FVGV…IIQL. 2 N-linked (GlcNAc...) asparagine glycosylation sites follow: asparagine 214 and asparagine 219. A helical membrane pass occupies residues 247–267; that stretch reads SFPSQHATLAAFAAVYVSMYF. An N-linked (GlcNAc...) asparagine glycan is attached at asparagine 268. Transmembrane regions (helical) follow at residues 276 to 296 and 308 to 328; these read KLLK…CGLT and VYCG…YAVG. At serine 346 the chain carries Phosphoserine. An N-linked (GlcNAc...) asparagine glycan is attached at asparagine 362. At serine 385 the chain carries Phosphoserine. The N-linked (GlcNAc...) asparagine glycan is linked to asparagine 432. Position 438 is a phosphoserine (serine 438). A glycan (N-linked (GlcNAc...) asparagine) is linked at asparagine 455. Residues 458–529 are disordered; it reads RKLSLQVIEP…PRVSIQSRPG (72 aa). 2 positions are modified to phosphoserine: serine 461 and serine 472. Residues asparagine 513, asparagine 543, and asparagine 568 are each glycosylated (N-linked (GlcNAc...) asparagine). Phosphoserine is present on serine 606. A compositionally biased stretch (basic and acidic residues) spans 669–694; it reads DSESCESLKDSFGSGDRKRSNIDSNE. Disordered regions lie at residues 669-698 and 739-763; these read DSES…HHHH and ERSN…AYKD. Residues 740–749 are compositionally biased toward polar residues; it reads RSNSPENTRN.

The protein belongs to the PA-phosphatase related phosphoesterase family. Post-translationally, O-glycosylated. Probably at Ser-346. Expressed by glutamatergic neurons (at protein level).

Its subcellular location is the postsynaptic density membrane. In terms of biological role, postsynaptic density membrane protein that indirectly regulates glutamatergic synaptic transmission through lysophosphatidic acid (LPA)-mediated signaling pathways. Binds lysophosphatidic acid (LPA) and mediates its internalization into cells. Could act as receptor or a transporter of this lipid at the post-synaptic membrane. Modulates lysophosphatidic acid (LPA) activity in neuron axonal outgrowth during development by attenuating phospholipid-induced axon collapse. This chain is Phospholipid phosphatase-related protein type 4, found in Homo sapiens (Human).